Here is a 216-residue protein sequence, read N- to C-terminus: Flagellin B2 (216 aa).

Residues 1–12 (MKIKEFMSNKKG) constitute a propeptide that is removed on maturation. N-linked (GlcNAc...) asparagine glycosylation is found at asparagine 38, asparagine 72, asparagine 77, asparagine 113, asparagine 172, and asparagine 208.

Belongs to the archaeal flagellin family. In terms of processing, N-linked glycans consist of the 779 Da trisaccharide beta-ManNAc(Thr)-(1-4)-beta-GlcNAc3NAcA-(1-3)-beta-GlcNAc.

The protein localises to the archaeal flagellum. Its function is as follows. Flagellin is the subunit protein which polymerizes to form the filaments of archaeal flagella. The chain is Flagellin B2 (flaB2) from Methanococcus voltae.